The chain runs to 377 residues: Lactosylceramide 1,3-N-acetyl-beta-D-glucosaminyltransferase (377 aa).

Topologically, residues 1–12 are cytoplasmic; the sequence is MLISARRLRRCQ. Residues 13–30 traverse the membrane as a helical; Signal-anchor for type II membrane protein segment; sequence FFQLLTSCFVLSLMALLV. The Lumenal portion of the chain corresponds to 31 to 377; it reads QEDNSLINHV…DTYPCSAAWS (347 aa). Residues asparagine 56, asparagine 167, and asparagine 275 are each glycosylated (N-linked (GlcNAc...) asparagine).

It belongs to the glycosyltransferase 31 family.

The protein resides in the golgi apparatus membrane. The enzyme catalyses a beta-D-Gal-(1-&gt;4)-beta-D-Glc-(1&lt;-&gt;1)-Cer(d18:1(4E)) + UDP-N-acetyl-alpha-D-glucosamine = a beta-D-GlcNAc-(1-&gt;3)-beta-D-Gal-(1-&gt;4)-beta-D-Glc-(1&lt;-&gt;1)-Cer(d18:1(4E)) + UDP + H(+). It carries out the reaction a neolactoside nLc4Cer(d18:1(4E)) + UDP-N-acetyl-alpha-D-glucosamine = a neolactoside IV(3)-beta-GlcNAc-nLc4Cer(d18:1(4E)) + UDP + H(+). It participates in protein modification; protein glycosylation. Functionally, beta-1,3-N-acetylglucosaminyltransferase that plays a key role in the synthesis of lacto- or neolacto-series carbohydrate chains on glycolipids. The protein is Lactosylceramide 1,3-N-acetyl-beta-D-glucosaminyltransferase (b3gnt5) of Xenopus tropicalis (Western clawed frog).